The following is a 207-amino-acid chain: Protein LURP1 (207 aa).

Belongs to the LOR family. Limited to discrete pathogen infection sites in leaves.

Its function is as follows. Involved in basal defense against virulent oomycetes. Might be related to the phospholipid scramblase and tubby-like superfamily of membrane tethered transcription factors. This is Protein LURP1 (LURP1) from Arabidopsis thaliana (Mouse-ear cress).